The primary structure comprises 431 residues: Glutamyl-tRNA(Gln) amidotransferase subunit A (431 aa).

Residues Lys-55 and Ser-130 each act as charge relay system in the active site. Ser-154 functions as the Acyl-ester intermediate in the catalytic mechanism.

This sequence belongs to the amidase family. GatA subfamily. In terms of assembly, heterotrimer of A, B and C subunits.

It catalyses the reaction L-glutamyl-tRNA(Gln) + L-glutamine + ATP + H2O = L-glutaminyl-tRNA(Gln) + L-glutamate + ADP + phosphate + H(+). Allows the formation of correctly charged Gln-tRNA(Gln) through the transamidation of misacylated Glu-tRNA(Gln) in organisms which lack glutaminyl-tRNA synthetase. The reaction takes place in the presence of glutamine and ATP through an activated gamma-phospho-Glu-tRNA(Gln). The protein is Glutamyl-tRNA(Gln) amidotransferase subunit A of Methanococcus maripaludis (strain C5 / ATCC BAA-1333).